Reading from the N-terminus, the 331-residue chain is Ferredoxin--NADP reductase 2 (331 aa).

FAD-binding residues include Glu37, Gln45, Tyr50, Val90, Phe124, Asp286, and Thr327.

The protein belongs to the ferredoxin--NADP reductase type 2 family. As to quaternary structure, homodimer. It depends on FAD as a cofactor.

It carries out the reaction 2 reduced [2Fe-2S]-[ferredoxin] + NADP(+) + H(+) = 2 oxidized [2Fe-2S]-[ferredoxin] + NADPH. The polypeptide is Ferredoxin--NADP reductase 2 (Listeria monocytogenes serotype 4b (strain F2365)).